The primary structure comprises 166 residues: Ureidoglycolate lyase (166 aa).

It belongs to the ureidoglycolate lyase family. As to quaternary structure, homodimer. The cofactor is Ni(2+).

It carries out the reaction (S)-ureidoglycolate = urea + glyoxylate. Its pathway is nitrogen metabolism; (S)-allantoin degradation. Catalyzes the catabolism of the allantoin degradation intermediate (S)-ureidoglycolate, generating urea and glyoxylate. Involved in the utilization of allantoin as nitrogen source. The polypeptide is Ureidoglycolate lyase (Agrobacterium fabrum (strain C58 / ATCC 33970) (Agrobacterium tumefaciens (strain C58))).